The primary structure comprises 139 residues: MGVISEFKAFAVKGNVVDMAVGIIIGAAFGKIVSSFVGDVVMPPIGLLIGGVDFGDLAITLKAAQGDVPAVVLAYGKFIQSVIDFVIVAFAIFMGVKAINRLKREEAVAPSLPPTPTKEEVLLGEIRDLLKAQNDKPLP.

The next 2 membrane-spanning stretches (helical) occupy residues 9–29 (AFAV…GAAF) and 79–99 (IQSV…VKAI).

The protein belongs to the MscL family. Homopentamer.

Its subcellular location is the cell inner membrane. Its function is as follows. Channel that opens in response to stretch forces in the membrane lipid bilayer. May participate in the regulation of osmotic pressure changes within the cell. In Pseudomonas fluorescens (strain SBW25), this protein is Large-conductance mechanosensitive channel.